Here is a 495-residue protein sequence, read N- to C-terminus: IQ domain-containing protein IQM5 (495 aa).

Residues 89–122 (ENRGGEEEDERGSSPKRRNRGNLTALSLPAPTPF) are disordered. In terms of domain architecture, IQ spans 131 to 160 (LDAAAVTLQKVYKSYRTRRNLADCAVVVEE).

Expressed in roots, rosette and cauline leaves, and at lower levels in stems, flowers and siliques.

It is found in the cytoplasm. It localises to the nucleus. May be involved in biotic and abiotic stress responses. The sequence is that of IQ domain-containing protein IQM5 from Arabidopsis thaliana (Mouse-ear cress).